We begin with the raw amino-acid sequence, 136 residues long: Large ribosomal subunit protein eL27 (136 aa).

Positions 5–40 (MKPGKVVMVLAGRYAGRKAVIVKNIDDGTADRPYSH) constitute a KOW domain.

It belongs to the eukaryotic ribosomal protein eL27 family. As to quaternary structure, component of the large ribosomal subunit.

The protein resides in the cytoplasm. Its subcellular location is the cytosol. The protein localises to the rough endoplasmic reticulum. Functionally, component of the large ribosomal subunit. In Hippocampus comes (Tiger tail seahorse), this protein is Large ribosomal subunit protein eL27 (rpl27).